The primary structure comprises 358 residues: Protein RecA (358 aa).

69-76 serves as a coordination point for ATP; the sequence is GPESSGKT.

Belongs to the RecA family.

The protein resides in the cytoplasm. Can catalyze the hydrolysis of ATP in the presence of single-stranded DNA, the ATP-dependent uptake of single-stranded DNA by duplex DNA, and the ATP-dependent hybridization of homologous single-stranded DNAs. It interacts with LexA causing its activation and leading to its autocatalytic cleavage. This Trichormus variabilis (strain ATCC 29413 / PCC 7937) (Anabaena variabilis) protein is Protein RecA.